The chain runs to 111 residues: Universal stress protein B (111 aa).

2 helical membrane passes run 1 to 21 (MIST…NMAR) and 90 to 110 (FILT…LMIW).

The protein belongs to the universal stress protein B family.

The protein resides in the cell inner membrane. In Klebsiella pneumoniae (strain 342), this protein is Universal stress protein B.